A 60-amino-acid polypeptide reads, in one-letter code: UPF0337 protein asr1134 (60 aa).

Basic and acidic residues-rich tracts occupy residues 1 to 18 (MSLE…EGKA) and 29 to 60 (PEDK…KKID). Residues 1–60 (MSLEDRAKATGKNIEGKAQEALGNVTGDPEDKAEGKAKQAESEVRHGVEDVKDNVKKKID) are disordered.

This sequence belongs to the UPF0337 (CsbD) family.

In Nostoc sp. (strain PCC 7120 / SAG 25.82 / UTEX 2576), this protein is UPF0337 protein asr1134.